Consider the following 168-residue polypeptide: Small ribosomal subunit protein uS5 (168 aa).

Positions 13 to 76 constitute an S5 DRBM domain; it reads LAEKLIAVNR…EKARRNMINV (64 aa).

This sequence belongs to the universal ribosomal protein uS5 family. As to quaternary structure, part of the 30S ribosomal subunit. Contacts proteins S4 and S8.

Its function is as follows. With S4 and S12 plays an important role in translational accuracy. In terms of biological role, located at the back of the 30S subunit body where it stabilizes the conformation of the head with respect to the body. This chain is Small ribosomal subunit protein uS5, found in Pseudoalteromonas translucida (strain TAC 125).